A 373-amino-acid polypeptide reads, in one-letter code: Glutamate 5-kinase (373 aa).

ATP is bound at residue K15. Residues S55, D142, and N154 each coordinate substrate. ATP contacts are provided by residues 174–175 (TD) and 216–222 (TGGMATK). In terms of domain architecture, PUA spans 281 to 359 (AGRIIVDDGA…SRIEAILGYR (79 aa)).

This sequence belongs to the glutamate 5-kinase family.

It localises to the cytoplasm. It carries out the reaction L-glutamate + ATP = L-glutamyl 5-phosphate + ADP. It participates in amino-acid biosynthesis; L-proline biosynthesis; L-glutamate 5-semialdehyde from L-glutamate: step 1/2. Catalyzes the transfer of a phosphate group to glutamate to form L-glutamate 5-phosphate. In Pelobacter propionicus (strain DSM 2379 / NBRC 103807 / OttBd1), this protein is Glutamate 5-kinase.